A 399-amino-acid chain; its full sequence is Probable peptidoglycan glycosyltransferase FtsW (399 aa).

At 1–25 (MTAAAPSKPLPRTPRVRQAYPLDYP) the chain is on the cytoplasmic side. A helical transmembrane segment spans residues 26–46 (LLLCALGLLAFGWVMVTSASM). Topologically, residues 47–64 (SIAEACCQNPFHYSIRHA) are periplasmic. The helical transmembrane segment at 65–85 (IALGLALMLGLMAYSVPSHWW) threads the bilayer. Topologically, residues 86–88 (ERH) are cytoplasmic. A helical membrane pass occupies residues 89 to 109 (GVWLFLASALVLILVLIPGIG). Over 110-117 (RTVNGATR) the chain is Periplasmic. A helical membrane pass occupies residues 118–138 (WIPLGPLNVQPSEFVKLFAIL). At 139 to 153 (YVAGYLVRHADKVVN) the chain is on the cytoplasmic side. The chain crosses the membrane as a helical span at residues 154-174 (QLSGFIRPLILIGAAALLILM). Over 175 to 177 (QPD) the chain is Periplasmic. The next 2 membrane-spanning stretches (helical) occupy residues 178–198 (FGTT…GGAS) and 199–219 (LLPF…LVIF). At 220 to 281 (SPYRLERVVS…PEAHTDFLPS (62 aa)) the chain is on the periplasmic side. The helical transmembrane segment at 282-302 (VIGEELGLAGMLVLIAAFVFL) threads the bilayer. Residues 303-326 (SWRAMSIGVRAEALKRPFESYVAQ) lie on the Cytoplasmic side of the membrane. Residues 327–347 (GIGLWIGLQSFVNLGVNVGIL) traverse the membrane as a helical segment. Topologically, residues 348–353 (PTKGLT) are periplasmic. Residues 354–374 (LPFMSYGSNSLMVGCMAVAIL) traverse the membrane as a helical segment. Topologically, residues 375-399 (LRIDVMLRRVESEAKFKRGTPWSRA) are cytoplasmic.

Belongs to the SEDS family. FtsW subfamily.

Its subcellular location is the cell inner membrane. The catalysed reaction is [GlcNAc-(1-&gt;4)-Mur2Ac(oyl-L-Ala-gamma-D-Glu-L-Lys-D-Ala-D-Ala)](n)-di-trans,octa-cis-undecaprenyl diphosphate + beta-D-GlcNAc-(1-&gt;4)-Mur2Ac(oyl-L-Ala-gamma-D-Glu-L-Lys-D-Ala-D-Ala)-di-trans,octa-cis-undecaprenyl diphosphate = [GlcNAc-(1-&gt;4)-Mur2Ac(oyl-L-Ala-gamma-D-Glu-L-Lys-D-Ala-D-Ala)](n+1)-di-trans,octa-cis-undecaprenyl diphosphate + di-trans,octa-cis-undecaprenyl diphosphate + H(+). Its pathway is cell wall biogenesis; peptidoglycan biosynthesis. Functionally, peptidoglycan polymerase that is essential for cell division. In Allochromatium vinosum (strain ATCC 17899 / DSM 180 / NBRC 103801 / NCIMB 10441 / D) (Chromatium vinosum), this protein is Probable peptidoglycan glycosyltransferase FtsW.